The sequence spans 284 residues: Homeobox protein SIX1 (284 aa).

Residues 124-183 constitute a DNA-binding region (homeobox); it reads GEETSYCFKEKSRGVLREWYAHNPYPSPREKRELAEATGLTTTQVSNWFKNRRQRDRAAE. Residues 168-284 are disordered; that stretch reads VSNWFKNRRQ…LTSSLVDLGS (117 aa). Over residues 179-190 the composition is skewed to basic and acidic residues; that stretch reads DRAAEAKERENT. A compositionally biased stretch (polar residues) spans 227–284; it reads DQNSVLLLQSNMGHARSSNYSLPGLTASQPSHGLQAHQHQLQDSLLGPLTSSLVDLGS.

The protein belongs to the SIX/Sine oculis homeobox family. Interacts with DACH1. Interacts with EYA1. Interacts with EYA2. Interacts with CDH1. Interacts with TBX18. Interacts with CEBPA. Interacts with CEBPB. Interacts with EBF2. Post-translationally, phosphorylated during interphase; becomes hyperphosphorylated during mitosis. Hyperphosphorylation impairs binding to promoter elements. In terms of processing, ubiquitinated by the anaphase promoting complex (APC), leading to its proteasomal degradation. Expressed in phalangeal tendons and in skeletal muscle and in head and body mesenchyme.

Its subcellular location is the nucleus. It is found in the cytoplasm. Transcription factor that is involved in the regulation of cell proliferation, apoptosis and embryonic development. Plays an important role in the development of several organs, including kidney, muscle and inner ear. Depending on context, functions as a transcriptional repressor or activator. Lacks an activation domain, and requires interaction with EYA family members for transcription activation. Mediates nuclear translocation of EYA1 and EYA2. Binds the 5'-TCA[AG][AG]TTNC-3' motif present in the MEF3 element in the MYOG promoter and CIDEA enhancer. Regulates the expression of numerous genes, including MYC, CCNA1, CCND1 and EZR. Acts as an activator of the IGFBP5 promoter, probably coactivated by EYA2. Repression of precursor cell proliferation in myoblasts is switched to activation through recruitment of EYA3 to the SIX1-DACH1 complex. During myogenesis, seems to act together with EYA2 and DACH2. Regulates the expression of CCNA1. Promotes brown adipocyte differentiation. This is Homeobox protein SIX1 (Six1) from Mus musculus (Mouse).